The chain runs to 750 residues: Photosystem I P700 chlorophyll a apoprotein A1 (750 aa).

8 helical membrane passes run 70 to 93, 156 to 179, 195 to 219, 291 to 309, 346 to 369, 385 to 411, 433 to 455, and 531 to 549; these read IFSAHFGQLSIIFLWLSGMYFHGA, LYCTAIGALVFAALMLFAGWFHYH, LNHHLAGLLGLGSLSWAGHQVHVSL, IAHHHLAIAILFLIAGHMY, WHAQLALNLAMLGSLTIVVAHHMY, LSLFTHHMWIGGFLIVGAAAHAAIFMV, AIISHLNWACIFLGFHSFGLYIH, and FLVHHIHAFTIHVTVLILL. Residues C573 and C582 each contribute to the [4Fe-4S] cluster site. 2 consecutive transmembrane segments (helical) span residues 589–610 and 664–686; these read HVFLGLFWMYNAISVVIFHFSW and LSAYGLFFLGAHFVWAFSLMFLF. A chlorophyll a'-binding site is contributed by H675. Chlorophyll a is bound by residues M683 and Y691. Residue W692 coordinates phylloquinone. The helical transmembrane segment at 724 to 744 threads the bilayer; it reads AVGVTHYLLGGIATTWAFFLA.

It belongs to the PsaA/PsaB family. In terms of assembly, the PsaA/B heterodimer binds the P700 chlorophyll special pair and subsequent electron acceptors. PSI consists of a core antenna complex that captures photons, and an electron transfer chain that converts photonic excitation into a charge separation. The eukaryotic PSI reaction center is composed of at least 11 subunits. P700 is a chlorophyll a/chlorophyll a' dimer, A0 is one or more chlorophyll a, A1 is one or both phylloquinones and FX is a shared 4Fe-4S iron-sulfur center. is required as a cofactor.

It is found in the plastid. The protein resides in the chloroplast thylakoid membrane. The catalysed reaction is reduced [plastocyanin] + hnu + oxidized [2Fe-2S]-[ferredoxin] = oxidized [plastocyanin] + reduced [2Fe-2S]-[ferredoxin]. In terms of biological role, psaA and PsaB bind P700, the primary electron donor of photosystem I (PSI), as well as the electron acceptors A0, A1 and FX. PSI is a plastocyanin-ferredoxin oxidoreductase, converting photonic excitation into a charge separation, which transfers an electron from the donor P700 chlorophyll pair to the spectroscopically characterized acceptors A0, A1, FX, FA and FB in turn. Oxidized P700 is reduced on the lumenal side of the thylakoid membrane by plastocyanin. The chain is Photosystem I P700 chlorophyll a apoprotein A1 from Nandina domestica (Heavenly bamboo).